We begin with the raw amino-acid sequence, 360 residues long: Phosphoserine aminotransferase (360 aa).

Position 41 (Arg41) interacts with L-glutamate. Pyridoxal 5'-phosphate contacts are provided by Trp101, Thr152, Asp172, and Gln195. Lys196 bears the N6-(pyridoxal phosphate)lysine mark. Pyridoxal 5'-phosphate is bound at residue 237–238 (NT).

It belongs to the class-V pyridoxal-phosphate-dependent aminotransferase family. SerC subfamily. As to quaternary structure, homodimer. The cofactor is pyridoxal 5'-phosphate.

Its subcellular location is the cytoplasm. The enzyme catalyses O-phospho-L-serine + 2-oxoglutarate = 3-phosphooxypyruvate + L-glutamate. The catalysed reaction is 4-(phosphooxy)-L-threonine + 2-oxoglutarate = (R)-3-hydroxy-2-oxo-4-phosphooxybutanoate + L-glutamate. Its pathway is amino-acid biosynthesis; L-serine biosynthesis; L-serine from 3-phospho-D-glycerate: step 2/3. The protein operates within cofactor biosynthesis; pyridoxine 5'-phosphate biosynthesis; pyridoxine 5'-phosphate from D-erythrose 4-phosphate: step 3/5. Catalyzes the reversible conversion of 3-phosphohydroxypyruvate to phosphoserine and of 3-hydroxy-2-oxo-4-phosphonooxybutanoate to phosphohydroxythreonine. The sequence is that of Phosphoserine aminotransferase from Paraburkholderia phytofirmans (strain DSM 17436 / LMG 22146 / PsJN) (Burkholderia phytofirmans).